The chain runs to 563 residues: Solute carrier family 22 member 6 (563 aa).

Residues 1 to 9 (MAFNDLLQQ) lie on the Cytoplasmic side of the membrane. The helical transmembrane segment at 10–30 (VGGVGRFQQIQVTLVVLPLLL) threads the bilayer. The Extracellular segment spans residues 31-135 (MASHNTLQNF…LVCSHRALRQ (105 aa)). Asn-39, Asn-56, Asn-92, Asn-97, and Asn-113 each carry an N-linked (GlcNAc...) asparagine glycan. Residues 136 to 156 (LAQSLYMVGVLLGAMVFGYLA) form a helical membrane-spanning segment. Residues 157–164 (DRLGRRKV) are Cytoplasmic-facing. Residues 165-187 (LILNYLQTAVSGTCAAFAPNFPI) traverse the membrane as a helical segment. The Extracellular segment spans residues 188–190 (YCA). Residues 191 to 213 (FRLLSGMALAGISLNCMTLNVEW) traverse the membrane as a helical segment. The Cytoplasmic portion of the chain corresponds to 214-224 (MPIHTRACVGT). Residues 225-245 (LIGYVYSLGQFLLAGVAYAVP) traverse the membrane as a helical segment. Residues 246-248 (HWR) are Extracellular-facing. Residues 249–269 (HLQLLVSAPFFAFFIYSWFFI) traverse the membrane as a helical segment. At 270 to 337 (ESARWHSSSG…ELLRCPTLRH (68 aa)) the chain is on the cytoplasmic side. Residues 338–358 (LFLCLSMLWFATSFAYYGLVM) traverse the membrane as a helical segment. The Extracellular segment spans residues 359 to 368 (DLQGFGVSIY). A helical transmembrane segment spans residues 369–389 (LIQVIFGAVDLPAKLVGFLVI). Topologically, residues 390 to 395 (NSLGRR) are cytoplasmic. A helical membrane pass occupies residues 396 to 416 (PAQMAALLLAGICILLNGVIP). Topologically, residues 417–425 (QDQSIVRTS) are extracellular. The helical transmembrane segment at 426-446 (LAVLGKGCLAASFNCIFLYTG) threads the bilayer. The Cytoplasmic portion of the chain corresponds to 447–455 (ELYPTMIRQ). Residues 456–475 (TGMGMGSTMARVGSIVSPLV) traverse the membrane as a helical segment. The Extracellular portion of the chain corresponds to 476–484 (SMTAELYPS). Residues 485–505 (MPLFIYGAVPVAASAVTVLLP) form a helical membrane-spanning segment. The Cytoplasmic portion of the chain corresponds to 506–563 (ETLGQPLPDTVQDLESRWAPTQKEAGIYPRKGKQTRQQQEHQKYMVPLQASAQEKNGL). Positions 525–563 (PTQKEAGIYPRKGKQTRQQQEHQKYMVPLQASAQEKNGL) are disordered.

Belongs to the major facilitator (TC 2.A.1) superfamily. Organic cation transporter (TC 2.A.1.19) family. In terms of processing, glycosylated. Glycosylation at Asn-113 may occur at a secondary level. Glycosylation is necessary for proper targeting of the transporter to the plasma membrane. In terms of tissue distribution, strongly expressed in kidney. Expressed at lower level in liver, skeletal muscle, brain and placenta. In kidney, found at the basolateral membrane of the proximal tubule. In testis, primarily localized to the basal membrane of Sertoli cells and weakly expressed in Leydig cells and vascular endothelial cells.

Its subcellular location is the basolateral cell membrane. The protein resides in the basal cell membrane. It catalyses the reaction (6R)-L-erythro-5,6,7,8-tetrahydrobiopterin(out) + a dicarboxylate(in) = (6R)-L-erythro-5,6,7,8-tetrahydrobiopterin(in) + a dicarboxylate(out). The catalysed reaction is L-erythro-7,8-dihydrobiopterin(out) + a dicarboxylate(in) = L-erythro-7,8-dihydrobiopterin(in) + a dicarboxylate(out). The enzyme catalyses L-sepiapterin(out) + a dicarboxylate(in) = L-sepiapterin(in) + a dicarboxylate(out). It carries out the reaction prostaglandin F2alpha(out) + a dicarboxylate(in) = prostaglandin F2alpha(in) + a dicarboxylate(out). It catalyses the reaction prostaglandin E2(out) + a dicarboxylate(in) = prostaglandin E2(in) + a dicarboxylate(out). The catalysed reaction is 3',5'-cyclic AMP(out) + a dicarboxylate(in) = 3',5'-cyclic AMP(in) + a dicarboxylate(out). The enzyme catalyses 3',5'-cyclic GMP(out) + a dicarboxylate(in) = 3',5'-cyclic GMP(in) + a dicarboxylate(out). It carries out the reaction urate(out) + a dicarboxylate(in) = urate(in) + a dicarboxylate(out). It catalyses the reaction kynurenate(out) + glutarate(in) = kynurenate(in) + glutarate(out). The catalysed reaction is (indol-3-yl)acetate(out) + a dicarboxylate(in) = (indol-3-yl)acetate(in) + a dicarboxylate(out). The enzyme catalyses indoxyl sulfate(out) + a dicarboxylate(in) = indoxyl sulfate(in) + a dicarboxylate(out). It carries out the reaction N-benzoylglycine(out) + a dicarboxylate(in) = N-benzoylglycine(in) + a dicarboxylate(out). It catalyses the reaction 3-carboxy-4-methyl-5-propyl-2-furanpropanoate(out) + a dicarboxylate(in) = 3-carboxy-4-methyl-5-propyl-2-furanpropanoate(in) + a dicarboxylate(out). Secondary active transporter that functions as a Na(+)-independent organic anion (OA)/dicarboxylate antiporter where the uptake of one molecule of OA into the cell is coupled with an efflux of one molecule of intracellular dicarboxylate such as 2-oxoglutarate or glutarate. Mediates the uptake of OA across the basolateral side of proximal tubule epithelial cells, thereby contributing to the renal elimination of endogenous OA from the systemic circulation into the urine. Functions as a biopterin transporters involved in the uptake and the secretion of coenzymes tetrahydrobiopterin (BH4), dihydrobiopterin (BH2) and sepiapterin to urine, thereby determining baseline levels of blood biopterins. Transports prostaglandin E2 (PGE2) and prostaglandin F2-alpha (PGF2-alpha) and may contribute to their renal excretion. Also mediates the uptake of cyclic nucleotides such as cAMP and cGMP. Involved in the transport of neuroactive tryptophan metabolites kynurenate (KYNA) and xanthurenate (XA) and may contribute to their secretion from the brain. May transport glutamate. Also involved in the disposition of uremic toxins and potentially toxic xenobiotics by the renal organic anion secretory pathway, helping reduce their undesired toxicological effects on the body. Uremic toxins include the indoxyl sulfate (IS), hippurate/N-benzoylglycine (HA), indole acetate (IA), 3-carboxy-4- methyl-5-propyl-2-furanpropionate (CMPF) and urate. Xenobiotics include the mycotoxin ochratoxin (OTA). May also contribute to the transport of organic compounds in testes across the blood-testis-barrier. The polypeptide is Solute carrier family 22 member 6 (Homo sapiens (Human)).